A 60-amino-acid chain; its full sequence is Large ribosomal subunit protein uL30 (60 aa).

The protein belongs to the universal ribosomal protein uL30 family. Part of the 50S ribosomal subunit.

This chain is Large ribosomal subunit protein uL30, found in Dehalococcoides mccartyi (strain CBDB1).